Reading from the N-terminus, the 793-residue chain is Methionine--tRNA ligase (793 aa).

A 'HIGH' region motif is present at residues 11-21 (PYVNNFPHLGN). Zn(2+) contacts are provided by Cys142, Cys145, Cys155, and Cys158. Residues 334-338 (KFSKS) carry the 'KMSKS' region motif. Lys337 is a binding site for ATP. A compositionally biased stretch (basic and acidic residues) spans 581–590 (SQKDRKKSEK). Residues 581 to 610 (SQKDRKKSEKGCSACKDSGSSKSDAAASSA) are disordered. Residues 591–610 (GCSACKDSGSSKSDAAASSA) are compositionally biased toward low complexity. Residues 622 to 727 (FSKKIALKTA…PWAAPGTPVI (106 aa)) enclose the tRNA-binding domain.

Belongs to the class-I aminoacyl-tRNA synthetase family. MetG type 1 subfamily. In terms of assembly, homodimer. The cofactor is Zn(2+).

It localises to the cytoplasm. It carries out the reaction tRNA(Met) + L-methionine + ATP = L-methionyl-tRNA(Met) + AMP + diphosphate. Its function is as follows. Is required not only for elongation of protein synthesis but also for the initiation of all mRNA translation through initiator tRNA(fMet) aminoacylation. This Treponema denticola (strain ATCC 35405 / DSM 14222 / CIP 103919 / JCM 8153 / KCTC 15104) protein is Methionine--tRNA ligase.